A 159-amino-acid chain; its full sequence is Ribosomal RNA large subunit methyltransferase H (159 aa).

Residues Leu-76, Gly-108, and 127 to 132 (FGRLTL) contribute to the S-adenosyl-L-methionine site.

The protein belongs to the RNA methyltransferase RlmH family. In terms of assembly, homodimer.

It localises to the cytoplasm. The enzyme catalyses pseudouridine(1915) in 23S rRNA + S-adenosyl-L-methionine = N(3)-methylpseudouridine(1915) in 23S rRNA + S-adenosyl-L-homocysteine + H(+). Specifically methylates the pseudouridine at position 1915 (m3Psi1915) in 23S rRNA. This chain is Ribosomal RNA large subunit methyltransferase H, found in Listeria monocytogenes serovar 1/2a (strain ATCC BAA-679 / EGD-e).